A 279-amino-acid chain; its full sequence is Diaminopimelate epimerase (279 aa).

2 residues coordinate substrate: N11 and N72. C81 serves as the catalytic Proton donor. Residues 82-83 (GN), N187, and 205-206 (ER) contribute to the substrate site. C215 (proton acceptor) is an active-site residue. 216-217 (GT) lines the substrate pocket.

Belongs to the diaminopimelate epimerase family. Homodimer.

The protein localises to the cytoplasm. It carries out the reaction (2S,6S)-2,6-diaminopimelate = meso-2,6-diaminopimelate. It functions in the pathway amino-acid biosynthesis; L-lysine biosynthesis via DAP pathway; DL-2,6-diaminopimelate from LL-2,6-diaminopimelate: step 1/1. Its function is as follows. Catalyzes the stereoinversion of LL-2,6-diaminopimelate (L,L-DAP) to meso-diaminopimelate (meso-DAP), a precursor of L-lysine and an essential component of the bacterial peptidoglycan. This Aquifex aeolicus (strain VF5) protein is Diaminopimelate epimerase.